Consider the following 215-residue polypeptide: FBD domain-containing protein At3g58975 (215 aa).

Positions 122 to 199 (RSLTSCPVKK…KLSSCNVQLL (78 aa)) constitute an FBD domain.

The sequence is that of FBD domain-containing protein At3g58975 from Arabidopsis thaliana (Mouse-ear cress).